Reading from the N-terminus, the 249-residue chain is Aquaporin TIP4-3 (249 aa).

2 helical membrane passes run 20 to 40 and 56 to 76; these read GVLG…GAAM and TAVA…GFHI. The NPA 1 motif lies at 82-84; it reads NPA. The next 3 membrane-spanning stretches (helical) occupy residues 100–122, 141–161, and 169–189; these read SSLY…RWLT, GVVA…ATIL, and GAGP…GAAL. An NPA 2 motif is present at residues 195–197; it reads NPA. A helical transmembrane segment spans residues 214–234; that stretch reads VYWVGPLAGGPLAVLVYECCF.

Belongs to the MIP/aquaporin (TC 1.A.8) family. TIP (TC 1.A.8.10) subfamily.

It localises to the vacuole membrane. Aquaporins facilitate the transport of water and small neutral solutes across cell membranes. This chain is Aquaporin TIP4-3 (TIP4-3), found in Zea mays (Maize).